Consider the following 212-residue polypeptide: Large ribosomal subunit protein uL1 (212 aa).

The protein belongs to the universal ribosomal protein uL1 family. In terms of assembly, part of the 50S ribosomal subunit.

Functionally, binds directly to 23S rRNA. Probably involved in E site tRNA release. Its function is as follows. Protein L1 is also a translational repressor protein, it controls the translation of its operon by binding to its mRNA. This Methanothrix thermoacetophila (strain DSM 6194 / JCM 14653 / NBRC 101360 / PT) (Methanosaeta thermophila) protein is Large ribosomal subunit protein uL1.